The chain runs to 388 residues: Diacylglycerol O-acyltransferase 2 (388 aa).

Topologically, residues 1 to 69 (MKTLIAAYSG…NRSKVEKHLQ (69 aa)) are cytoplasmic. Residues 70–88 (VISVLQWVLSFLVLGVACS) traverse the membrane as a helical segment. Residues 89–92 (VILM) lie on the Lumenal side of the membrane. The chain crosses the membrane as a helical span at residues 93–112 (YTFCTDCWLIAALYFTWLAF). At 113–388 (DWNTPKKGGR…LPETEVLEVN (276 aa)) the chain is on the cytoplasmic side.

It belongs to the diacylglycerol acyltransferase family. As to quaternary structure, forms multimeric complexes consisting of several DGAT2 subunits. Interacts with SLC27A1 and this interaction is enhanced in the presence of ZFYVE1.

It localises to the endoplasmic reticulum membrane. Its subcellular location is the lipid droplet. The protein localises to the cytoplasm. The protein resides in the perinuclear region. It carries out the reaction an acyl-CoA + a 1,2-diacyl-sn-glycerol = a triacyl-sn-glycerol + CoA. It catalyses the reaction all-trans-retinol + an acyl-CoA = an all-trans-retinyl ester + CoA. The catalysed reaction is 2-(9Z-octadecenoyl)-glycerol + (9Z)-octadecenoyl-CoA = 1,2-di-(9Z-octadecenoyl)-sn-glycerol + CoA. The enzyme catalyses 1,2-di-(9Z-octadecenoyl)-sn-glycerol + (9Z)-octadecenoyl-CoA = 1,2,3-tri-(9Z-octadecenoyl)-glycerol + CoA. It carries out the reaction all-trans-retinol + hexadecanoyl-CoA = all-trans-retinyl hexadecanoate + CoA. It catalyses the reaction 1-O-(9Z-octadecenyl)-glycerol + (9Z)-octadecenoyl-CoA = 1-O-(9Z-octadecyl)-3-(9Z-octadecenoyl)-glycerol + CoA. The catalysed reaction is 1-(9Z-octadecenoyl)-glycerol + (9Z)-octadecenoyl-CoA = 1,2-di-(9Z-octadecenoyl)-glycerol + CoA. The enzyme catalyses 1,2-di-(9Z-octadecenoyl)-sn-glycerol + hexadecanoyl-CoA = 1,2-di-(9Z)-octadecenoyl-3-hexadecanoyl-sn-glycerol + CoA. It carries out the reaction 1,3-di-(9Z-octadecenoyl)-glycerol + (9Z)-octadecenoyl-CoA = 1,2,3-tri-(9Z-octadecenoyl)-glycerol + CoA. It catalyses the reaction 2,3-di-(9Z)-octadecenoyl-sn-glycerol + (9Z)-octadecenoyl-CoA = 1,2,3-tri-(9Z-octadecenoyl)-glycerol + CoA. The catalysed reaction is 2-(9Z-octadecenoyl)-glycerol + hexadecanoyl-CoA = 1-hexadecanoyl-2-(9Z-octadecenoyl)-sn-glycerol + CoA. The protein operates within glycerolipid metabolism; triacylglycerol biosynthesis. Inhibited by niacin. Essential acyltransferase that catalyzes the terminal and only committed step in triacylglycerol synthesis by using diacylglycerol and fatty acyl CoA as substrates. Required for synthesis and storage of intracellular triglycerides. Probably plays a central role in cytosolic lipid accumulation. In liver, is primarily responsible for incorporating endogenously synthesized fatty acids into triglycerides. Also functions as an acyl-CoA retinol acyltransferase (ARAT). Also able to use 1-monoalkylglycerol (1-MAkG) as an acyl acceptor for the synthesis of monoalkyl-monoacylglycerol (MAMAG). The protein is Diacylglycerol O-acyltransferase 2 of Rattus norvegicus (Rat).